The chain runs to 374 residues: Chaperone protein DnaJ (374 aa).

Residues aspartate 4 to glycine 69 form the J domain. The segment at glycine 131 to glutamate 210 adopts a CR-type zinc-finger fold. Cysteine 144, cysteine 147, cysteine 161, cysteine 164, cysteine 184, cysteine 187, cysteine 198, and cysteine 201 together coordinate Zn(2+). CXXCXGXG motif repeat units follow at residues cysteine 144–glycine 151, cysteine 161–glycine 168, cysteine 184–glycine 191, and cysteine 198–glycine 205.

The protein belongs to the DnaJ family. In terms of assembly, homodimer. Zn(2+) is required as a cofactor.

It is found in the cytoplasm. In terms of biological role, participates actively in the response to hyperosmotic and heat shock by preventing the aggregation of stress-denatured proteins and by disaggregating proteins, also in an autonomous, DnaK-independent fashion. Unfolded proteins bind initially to DnaJ; upon interaction with the DnaJ-bound protein, DnaK hydrolyzes its bound ATP, resulting in the formation of a stable complex. GrpE releases ADP from DnaK; ATP binding to DnaK triggers the release of the substrate protein, thus completing the reaction cycle. Several rounds of ATP-dependent interactions between DnaJ, DnaK and GrpE are required for fully efficient folding. Also involved, together with DnaK and GrpE, in the DNA replication of plasmids through activation of initiation proteins. The polypeptide is Chaperone protein DnaJ (Chelativorans sp. (strain BNC1)).